Reading from the N-terminus, the 355-residue chain is Peptide chain release factor 1 (355 aa).

Gln233 is subject to N5-methylglutamine.

This sequence belongs to the prokaryotic/mitochondrial release factor family. Post-translationally, methylated by PrmC. Methylation increases the termination efficiency of RF1.

It is found in the cytoplasm. In terms of biological role, peptide chain release factor 1 directs the termination of translation in response to the peptide chain termination codons UAG and UAA. The chain is Peptide chain release factor 1 from Bacillus cytotoxicus (strain DSM 22905 / CIP 110041 / 391-98 / NVH 391-98).